Consider the following 231-residue polypeptide: ATP phosphoribosyltransferase (231 aa).

It belongs to the ATP phosphoribosyltransferase family. Short subfamily. As to quaternary structure, heteromultimer composed of HisG and HisZ subunits.

The protein localises to the cytoplasm. It carries out the reaction 1-(5-phospho-beta-D-ribosyl)-ATP + diphosphate = 5-phospho-alpha-D-ribose 1-diphosphate + ATP. Its pathway is amino-acid biosynthesis; L-histidine biosynthesis; L-histidine from 5-phospho-alpha-D-ribose 1-diphosphate: step 1/9. Its function is as follows. Catalyzes the condensation of ATP and 5-phosphoribose 1-diphosphate to form N'-(5'-phosphoribosyl)-ATP (PR-ATP). Has a crucial role in the pathway because the rate of histidine biosynthesis seems to be controlled primarily by regulation of HisG enzymatic activity. In Brucella ovis (strain ATCC 25840 / 63/290 / NCTC 10512), this protein is ATP phosphoribosyltransferase.